The chain runs to 355 residues: Histidinol-phosphate aminotransferase (355 aa).

K222 carries the post-translational modification N6-(pyridoxal phosphate)lysine.

It belongs to the class-II pyridoxal-phosphate-dependent aminotransferase family. Histidinol-phosphate aminotransferase subfamily. Pyridoxal 5'-phosphate is required as a cofactor.

The enzyme catalyses L-histidinol phosphate + 2-oxoglutarate = 3-(imidazol-4-yl)-2-oxopropyl phosphate + L-glutamate. It participates in amino-acid biosynthesis; L-histidine biosynthesis; L-histidine from 5-phospho-alpha-D-ribose 1-diphosphate: step 7/9. The sequence is that of Histidinol-phosphate aminotransferase from Natronomonas pharaonis (strain ATCC 35678 / DSM 2160 / CIP 103997 / JCM 8858 / NBRC 14720 / NCIMB 2260 / Gabara) (Halobacterium pharaonis).